Consider the following 23-residue polypeptide: Superoxide dismutase [Mn], mitochondrial (23 aa).

It belongs to the iron/manganese superoxide dismutase family. Homotetramer. It depends on Mn(2+) as a cofactor.

It is found in the mitochondrion matrix. It carries out the reaction 2 superoxide + 2 H(+) = H2O2 + O2. Destroys superoxide anion radicals which are normally produced within the cells and which are toxic to biological systems. The sequence is that of Superoxide dismutase [Mn], mitochondrial from Aquarana catesbeiana (American bullfrog).